Consider the following 103-residue polypeptide: Signal recognition particle 19 kDa protein (103 aa).

It belongs to the SRP19 family. As to quaternary structure, part of the signal recognition particle protein translocation system, which is composed of SRP and FtsY. Archaeal SRP consists of a 7S RNA molecule of 300 nucleotides and two protein subunits: SRP54 and SRP19.

It is found in the cytoplasm. Its function is as follows. Involved in targeting and insertion of nascent membrane proteins into the cytoplasmic membrane. Binds directly to 7S RNA and mediates binding of the 54 kDa subunit of the SRP. This is Signal recognition particle 19 kDa protein from Methanopyrus kandleri (strain AV19 / DSM 6324 / JCM 9639 / NBRC 100938).